A 159-amino-acid polypeptide reads, in one-letter code: MNHKKEKEYKKLDTEKLKENLTELQYNVTQRNATEKPFLNKYDKHFEDGIYVDIVSGEPLFLSIDKFNSGCGWPAFSKPISRKYIKERADFSHGMSRIEVRSKNADSHLGHVFNDGPIENGGMRYCINSASLKFIAKDKLKEEGYEEFLPLFEKDKQEL.

Residues 14–137 form the MsrB domain; sequence TEKLKENLTE…NSASLKFIAK (124 aa). Catalysis depends on cysteine 126, which acts as the Nucleophile.

It belongs to the MsrB Met sulfoxide reductase family.

It catalyses the reaction L-methionyl-[protein] + [thioredoxin]-disulfide + H2O = L-methionyl-(R)-S-oxide-[protein] + [thioredoxin]-dithiol. The chain is Peptide methionine sulfoxide reductase MsrB from Hathewaya histolytica (Clostridium histolyticum).